Consider the following 155-residue polypeptide: 3-hydroxyacyl-[acyl-carrier-protein] dehydratase FabZ (155 aa).

Residue histidine 61 is part of the active site.

The protein belongs to the thioester dehydratase family. FabZ subfamily.

Its subcellular location is the cytoplasm. The catalysed reaction is a (3R)-hydroxyacyl-[ACP] = a (2E)-enoyl-[ACP] + H2O. Involved in unsaturated fatty acids biosynthesis. Catalyzes the dehydration of short chain beta-hydroxyacyl-ACPs and long chain saturated and unsaturated beta-hydroxyacyl-ACPs. The polypeptide is 3-hydroxyacyl-[acyl-carrier-protein] dehydratase FabZ (Synechococcus sp. (strain ATCC 27144 / PCC 6301 / SAUG 1402/1) (Anacystis nidulans)).